A 342-amino-acid chain; its full sequence is Sideroflexin-5 (342 aa).

Over residues 1–24 (MADTATTASAASAAASASNASSDA) the composition is skewed to low complexity. A disordered region spans residues 1–29 (MADTATTASAASAAASASNASSDAPPFQL). The next 4 membrane-spanning stretches (helical) occupy residues 105–125 (IFMPFRMSGYIPFGTPIVVGL), 165–185 (FIQGYLGAVISAVSIAVGLNV), 256–276 (LTRVVLPMPILVLPPIVMSML), and 289–309 (LLPVHSLVCLAAFGLALPLAI).

The protein belongs to the sideroflexin family. In terms of tissue distribution, specifically expressed in the brain.

Its subcellular location is the mitochondrion inner membrane. The enzyme catalyses citrate(in) = citrate(out). Mitochondrial amino-acid transporter. Transports citrate. Does not act as a serine transporter: not able to mediate transport of serine into mitochondria. In brown adipose tissue, plays a role in the regulation of UCP1-dependent thermogenesis probably by supporting mitochondrial glycerol-3-phosphate utilization. This chain is Sideroflexin-5, found in Rattus norvegicus (Rat).